The sequence spans 397 residues: S-adenosylmethionine synthase (397 aa).

H15 contributes to the ATP binding site. Residue D17 participates in Mg(2+) binding. E43 serves as a coordination point for K(+). E56 and Q99 together coordinate L-methionine. The interval 99 to 109 (QSPDIAQGVTA) is flexible loop. Residues 173 to 175 (DGK), 242 to 243 (KF), D251, 257 to 258 (RK), A274, and K278 contribute to the ATP site. An L-methionine-binding site is contributed by D251. An L-methionine-binding site is contributed by K282.

It belongs to the AdoMet synthase family. As to quaternary structure, homotetramer; dimer of dimers. Mg(2+) is required as a cofactor. K(+) serves as cofactor.

The protein resides in the cytoplasm. It carries out the reaction L-methionine + ATP + H2O = S-adenosyl-L-methionine + phosphate + diphosphate. It functions in the pathway amino-acid biosynthesis; S-adenosyl-L-methionine biosynthesis; S-adenosyl-L-methionine from L-methionine: step 1/1. Its function is as follows. Catalyzes the formation of S-adenosylmethionine (AdoMet) from methionine and ATP. The overall synthetic reaction is composed of two sequential steps, AdoMet formation and the subsequent tripolyphosphate hydrolysis which occurs prior to release of AdoMet from the enzyme. The polypeptide is S-adenosylmethionine synthase (Cutibacterium acnes (strain DSM 16379 / KPA171202) (Propionibacterium acnes)).